Reading from the N-terminus, the 127-residue chain is Fluoride-specific ion channel FluC (127 aa).

Transmembrane regions (helical) follow at residues 4-24 (SLLV…LLGM), 37-57 (TVVA…FLAA), 68-88 (LIIT…AETV), and 96-116 (LLWA…MTAA). The Na(+) site is built by Gly-75 and Thr-78.

It belongs to the fluoride channel Fluc/FEX (TC 1.A.43) family.

Its subcellular location is the cell inner membrane. It carries out the reaction fluoride(in) = fluoride(out). Na(+) is not transported, but it plays an essential structural role and its presence is essential for fluoride channel function. In terms of biological role, fluoride-specific ion channel. Important for reducing fluoride concentration in the cell, thus reducing its toxicity. This chain is Fluoride-specific ion channel FluC, found in Pseudomonas syringae pv. maculicola.